The sequence spans 238 residues: Probable transcriptional regulatory protein CPn_0573/CP_0176/CPj0573/CpB0595 (238 aa).

A disordered region spans residues M1–K20. The span at N9–K20 shows a compositional bias: basic residues.

It belongs to the TACO1 family.

It localises to the cytoplasm. The polypeptide is Probable transcriptional regulatory protein CPn_0573/CP_0176/CPj0573/CpB0595 (Chlamydia pneumoniae (Chlamydophila pneumoniae)).